The sequence spans 137 residues: ATP synthase epsilon chain (137 aa).

This sequence belongs to the ATPase epsilon chain family. F-type ATPases have 2 components, CF(1) - the catalytic core - and CF(0) - the membrane proton channel. CF(1) has five subunits: alpha(3), beta(3), gamma(1), delta(1), epsilon(1). CF(0) has three main subunits: a, b and c.

It is found in the cell membrane. Functionally, produces ATP from ADP in the presence of a proton gradient across the membrane. The protein is ATP synthase epsilon chain of Caldicellulosiruptor bescii (strain ATCC BAA-1888 / DSM 6725 / KCTC 15123 / Z-1320) (Anaerocellum thermophilum).